The primary structure comprises 64 residues: uncharacterized protein (64 aa).

This is an uncharacterized protein from Dictyostelium discoideum (Social amoeba).